A 350-amino-acid polypeptide reads, in one-letter code: Ferredoxin--NADP reductase (350 aa).

8 residues coordinate FAD: T25, E44, Q52, Y57, V97, F132, D298, and S339.

The protein belongs to the ferredoxin--NADP reductase type 2 family. As to quaternary structure, homodimer. FAD serves as cofactor.

The enzyme catalyses 2 reduced [2Fe-2S]-[ferredoxin] + NADP(+) + H(+) = 2 oxidized [2Fe-2S]-[ferredoxin] + NADPH. This Chlorobium limicola (strain DSM 245 / NBRC 103803 / 6330) protein is Ferredoxin--NADP reductase.